A 273-amino-acid chain; its full sequence is Glutamate 5-kinase (273 aa).

Lysine 15 contributes to the ATP binding site. Positions 55, 142, and 158 each coordinate substrate. ATP is bound by residues 178–179 and 220–226; these read SD and TGGMLSK.

It belongs to the glutamate 5-kinase family.

It localises to the cytoplasm. The enzyme catalyses L-glutamate + ATP = L-glutamyl 5-phosphate + ADP. Its pathway is amino-acid biosynthesis; L-proline biosynthesis; L-glutamate 5-semialdehyde from L-glutamate: step 1/2. Its function is as follows. Catalyzes the transfer of a phosphate group to glutamate to form L-glutamate 5-phosphate. This chain is Glutamate 5-kinase, found in Streptococcus pyogenes serotype M2 (strain MGAS10270).